The primary structure comprises 546 residues: Chaperonin GroEL (546 aa).

ATP is bound by residues 30–33 (TLGP), Lys-51, 87–91 (DGTTT), Gly-415, 479–481 (NAA), and Asp-495.

Belongs to the chaperonin (HSP60) family. As to quaternary structure, forms a cylinder of 14 subunits composed of two heptameric rings stacked back-to-back. Interacts with the co-chaperonin GroES.

It localises to the cytoplasm. It catalyses the reaction ATP + H2O + a folded polypeptide = ADP + phosphate + an unfolded polypeptide.. Functionally, together with its co-chaperonin GroES, plays an essential role in assisting protein folding. The GroEL-GroES system forms a nano-cage that allows encapsulation of the non-native substrate proteins and provides a physical environment optimized to promote and accelerate protein folding. The sequence is that of Chaperonin GroEL from Pseudomonas putida (strain W619).